The following is a 214-amino-acid chain: Probable nicotinate-nucleotide adenylyltransferase (214 aa).

This sequence belongs to the NadD family.

It carries out the reaction nicotinate beta-D-ribonucleotide + ATP + H(+) = deamido-NAD(+) + diphosphate. The protein operates within cofactor biosynthesis; NAD(+) biosynthesis; deamido-NAD(+) from nicotinate D-ribonucleotide: step 1/1. In terms of biological role, catalyzes the reversible adenylation of nicotinate mononucleotide (NaMN) to nicotinic acid adenine dinucleotide (NaAD). The chain is Probable nicotinate-nucleotide adenylyltransferase from Pelodictyon phaeoclathratiforme (strain DSM 5477 / BU-1).